The sequence spans 171 residues: Putative pre-16S rRNA nuclease (171 aa).

The protein belongs to the YqgF nuclease family.

Its subcellular location is the cytoplasm. In terms of biological role, could be a nuclease involved in processing of the 5'-end of pre-16S rRNA. This is Putative pre-16S rRNA nuclease from Corynebacterium diphtheriae (strain ATCC 700971 / NCTC 13129 / Biotype gravis).